A 51-amino-acid chain; its full sequence is Large ribosomal subunit protein eL39 (51 aa).

Basic residues predominate over residues 1–15 (MAAKKSFKIKQKLAK). Positions 1-21 (MAAKKSFKIKQKLAKAKNQNR) are disordered.

This sequence belongs to the eukaryotic ribosomal protein eL39 family. Interacts with YIH1.

In Eremothecium gossypii (strain ATCC 10895 / CBS 109.51 / FGSC 9923 / NRRL Y-1056) (Yeast), this protein is Large ribosomal subunit protein eL39 (RPL39).